The chain runs to 306 residues: uncharacterized protein (306 aa).

Belongs to the asfivirus CP312R family.

The protein resides in the virion. This is an uncharacterized protein from African swine fever virus (isolate Pig/Kenya/KEN-50/1950) (ASFV).